A 425-amino-acid chain; its full sequence is Enolase (425 aa).

(2R)-2-phosphoglycerate is bound at residue Gln163. Residue Glu205 is the Proton donor of the active site. Asp242, Glu285, and Asp312 together coordinate Mg(2+). (2R)-2-phosphoglycerate contacts are provided by Lys337, Arg366, Ser367, and Lys388. Residue Lys337 is the Proton acceptor of the active site.

It belongs to the enolase family. Mg(2+) is required as a cofactor.

It is found in the cytoplasm. The protein localises to the secreted. Its subcellular location is the cell surface. It catalyses the reaction (2R)-2-phosphoglycerate = phosphoenolpyruvate + H2O. The protein operates within carbohydrate degradation; glycolysis; pyruvate from D-glyceraldehyde 3-phosphate: step 4/5. In terms of biological role, catalyzes the reversible conversion of 2-phosphoglycerate (2-PG) into phosphoenolpyruvate (PEP). It is essential for the degradation of carbohydrates via glycolysis. This Acidiphilium cryptum (strain JF-5) protein is Enolase.